The primary structure comprises 274 residues: 2-dehydro-3-deoxyphosphooctonate aldolase (274 aa).

It belongs to the KdsA family.

The protein resides in the cytoplasm. The enzyme catalyses D-arabinose 5-phosphate + phosphoenolpyruvate + H2O = 3-deoxy-alpha-D-manno-2-octulosonate-8-phosphate + phosphate. It participates in carbohydrate biosynthesis; 3-deoxy-D-manno-octulosonate biosynthesis; 3-deoxy-D-manno-octulosonate from D-ribulose 5-phosphate: step 2/3. The protein operates within bacterial outer membrane biogenesis; lipopolysaccharide biosynthesis. The polypeptide is 2-dehydro-3-deoxyphosphooctonate aldolase (Rickettsia canadensis (strain McKiel)).